Reading from the N-terminus, the 286-residue chain is 4-diphosphocytidyl-2-C-methyl-D-erythritol kinase (286 aa).

Lysine 11 is a catalytic residue. 93-103 is an ATP binding site; the sequence is PFGAGLGGGSS. Aspartate 135 is a catalytic residue.

The protein belongs to the GHMP kinase family. IspE subfamily.

It carries out the reaction 4-CDP-2-C-methyl-D-erythritol + ATP = 4-CDP-2-C-methyl-D-erythritol 2-phosphate + ADP + H(+). Its pathway is isoprenoid biosynthesis; isopentenyl diphosphate biosynthesis via DXP pathway; isopentenyl diphosphate from 1-deoxy-D-xylulose 5-phosphate: step 3/6. In terms of biological role, catalyzes the phosphorylation of the position 2 hydroxy group of 4-diphosphocytidyl-2C-methyl-D-erythritol. This is 4-diphosphocytidyl-2-C-methyl-D-erythritol kinase from Prosthecochloris aestuarii (strain DSM 271 / SK 413).